We begin with the raw amino-acid sequence, 87 residues long: HssA/B-like protein 28 (87 aa).

The protein belongs to the hssA/B family.

This Dictyostelium discoideum (Social amoeba) protein is HssA/B-like protein 28 (hssl28).